The following is a 205-amino-acid chain: Small ribosomal subunit protein uS4 (205 aa).

The interval Ile19–Leu45 is disordered. The S4 RNA-binding domain occupies Ser94 to Val157.

This sequence belongs to the universal ribosomal protein uS4 family. Part of the 30S ribosomal subunit. Contacts protein S5. The interaction surface between S4 and S5 is involved in control of translational fidelity.

One of the primary rRNA binding proteins, it binds directly to 16S rRNA where it nucleates assembly of the body of the 30S subunit. Functionally, with S5 and S12 plays an important role in translational accuracy. The polypeptide is Small ribosomal subunit protein uS4 (Brucella melitensis biotype 2 (strain ATCC 23457)).